The sequence spans 784 residues: 1-phosphatidylinositol 4,5-bisphosphate phosphodiesterase delta-3-A (784 aa).

Residues 1 to 25 (MLGRKKNPETVQTESKSVESKTHDP) form a disordered region. Basic and acidic residues predominate over residues 16-25 (KSVESKTHDP). Residues 38–149 (LLMLQGSKMM…WVRGIRTLKD (112 aa)) enclose the PH domain. The interval 48–78 (KVRSQRWRKDRRLKLLEDCVTVWCESSKTSR) is substrate binding. EF-hand domains follow at residues 159–194 (KLDH…INID), 195–230 (LNEQ…MMRR), and 227–262 (MMRR…QGED). Ca(2+)-binding residues include Asp-172, Asn-174, Asp-176, Lys-178, Glu-183, Asp-208, Ser-210, Asp-212, Arg-214, and Glu-219. In terms of domain architecture, PI-PLC X-box spans 313–458 (QDMSKPLAHY…LKGRILLKGK (146 aa)). His-328 is an active-site residue. Positions 329, 358, and 360 each coordinate Ca(2+). Residue His-373 is part of the active site. Residue Glu-407 participates in Ca(2+) binding. Residues Lys-456 and Lys-458 each coordinate substrate. The segment at 473-498 (FTNSSDEESVAGGNKKESKKDLARSA) is disordered. Residues 486–495 (NKKESKKDLA) show a composition bias toward basic and acidic residues. Positions 506 to 621 (LSDLVVYCQS…GYVLKPEFLC (116 aa)) constitute a PI-PLC Y-box domain. Residues Ser-534 and Arg-561 each contribute to the substrate site. Residues 621 to 750 (CDPKSDFDPE…TGYRHVHLLK (130 aa)) enclose the C2 domain. Residues Ile-664, Asp-666, Asn-690, Asp-719, and Asp-721 each contribute to the Ca(2+) site.

Ca(2+) serves as cofactor.

It is found in the membrane. Its subcellular location is the cytoplasm. The protein resides in the cleavage furrow. It carries out the reaction a 1,2-diacyl-sn-glycero-3-phospho-(1D-myo-inositol-4,5-bisphosphate) + H2O = 1D-myo-inositol 1,4,5-trisphosphate + a 1,2-diacyl-sn-glycerol + H(+). Functionally, hydrolyzes the phosphatidylinositol 4,5-bisphosphate (PIP2) to generate 2 second messenger molecules diacylglycerol (DAG) and inositol 1,4,5-trisphosphate (IP3). DAG mediates the activation of protein kinase C (PKC), while IP3 releases Ca(2+) from intracellular stores. This is 1-phosphatidylinositol 4,5-bisphosphate phosphodiesterase delta-3-A (plcd3a) from Danio rerio (Zebrafish).